Here is a 210-residue protein sequence, read N- to C-terminus: MEGFFFVRNQNIKFSDNVNYHYRFNINSCAKFLAFWDYFSGALVEHSHAEKCIHFYHENDLRDSCNTESMLDKLMLRFIFSSDQNVSNALAMIRMTESYHLVLYLLRTIEKEKEVRIKSLTEHYGVSEAYFRSLCRKALGAKVKEQLNTWRLVNGLLDVFLHNQTITSAAMNNGYASTSHFSNEIKTRLGFSARELSNITFLVKKINEKI.

The region spanning 99-199 is the HTH araC/xylS-type domain; it reads YHLVLYLLRT…GFSARELSNI (101 aa). 2 consecutive DNA-binding regions (H-T-H motif) follow at residues 118-139 and 166-189; these read KSLT…RKAL and ITSA…KTRL.

In terms of biological role, necessary for the secretion of ipa invasins. Probable transcriptional regulatory protein. The protein is Transcriptional regulator MxiE (mxiE) of Shigella flexneri.